Consider the following 451-residue polypeptide: UPF0210 protein LMOf2365_0563 (451 aa).

Belongs to the UPF0210 family. Homodimer.

The polypeptide is UPF0210 protein LMOf2365_0563 (Listeria monocytogenes serotype 4b (strain F2365)).